The chain runs to 72 residues: Exodeoxyribonuclease 7 small subunit (72 aa).

It belongs to the XseB family. Heterooligomer composed of large and small subunits.

It localises to the cytoplasm. The catalysed reaction is Exonucleolytic cleavage in either 5'- to 3'- or 3'- to 5'-direction to yield nucleoside 5'-phosphates.. In terms of biological role, bidirectionally degrades single-stranded DNA into large acid-insoluble oligonucleotides, which are then degraded further into small acid-soluble oligonucleotides. The sequence is that of Exodeoxyribonuclease 7 small subunit from Chlamydia trachomatis serovar L2 (strain ATCC VR-902B / DSM 19102 / 434/Bu).